Here is a 228-residue protein sequence, read N- to C-terminus: MLCPPMALGPFLAAPVPRPPPSASEKKRICRNLFNNAPGDSNIDQLLAQEQHTQRLYVKERYGYDIQLESNRDADANTDADADTDAHCQVLRGMRYPTSRTISSTDADECNPKAVSQAPRGMALTPAQISASAKLILQKCPESDRKKSNGSADLANCTRHGQKPYARQPQGLKGMYNVRKTVNGISKPNVKNGYNNNNNSSSSNNNSNMNINNKIVDNGTSELADQKQ.

Topologically, residues 1–120 (MLCPPMALGP…NPKAVSQAPR (120 aa)) are cytoplasmic. The chain crosses the membrane as a helical; Signal-anchor for type II membrane protein span at residues 121-137 (GMALTPAQISASAKLIL). The Extracellular portion of the chain corresponds to 138 to 228 (QKCPESDRKK…GTSELADQKQ (91 aa)). Residues 141–228 (PESDRKKSNG…GTSELADQKQ (88 aa)) are disordered. N-linked (GlcNAc...) asparagine glycans are attached at residues asparagine 149, asparagine 156, asparagine 198, asparagine 199, asparagine 205, and asparagine 218. Positions 195–213 (NNNNNSSSSNNNSNMNINN) are enriched in low complexity. A compositionally biased stretch (polar residues) spans 218 to 228 (NGTSELADQKQ).

Expressed by a subset of glial cells found at the midline of the embryo stage 12 nervous system. Expression is highest during the formation of the embryonic axonal commissures, a process requiring midline glial cell function (at protein level).

Its subcellular location is the membrane. Has a role in intercellular carbohydrate-mediated cell adhesion. This chain is Gliolectin, found in Drosophila melanogaster (Fruit fly).